A 72-amino-acid chain; its full sequence is Antimicrobial peptide MeuNaTxbeta-4 (72 aa).

An N-terminal signal peptide occupies residues 1-5 (LIGVK). An LCN-type CS-alpha/beta domain is found at 7-69 (EHGYLLDKYT…LWHYETNKCN (63 aa)). Intrachain disulfides connect cysteine 18–cysteine 68, cysteine 22–cysteine 43, cysteine 29–cysteine 50, and cysteine 33–cysteine 52.

As to expression, expressed by the venom gland.

It is found in the secreted. In terms of biological role, antimicrobial peptide with weak activity against both Gram-positive and -negative bacteria. Its antibiotic activity is potentiated by other antibacterial peptides such as Meucin-49. The protein is Antimicrobial peptide MeuNaTxbeta-4 of Mesobuthus eupeus (Lesser Asian scorpion).